We begin with the raw amino-acid sequence, 148 residues long: Large ribosomal subunit protein bL9 (148 aa).

This sequence belongs to the bacterial ribosomal protein bL9 family.

Its function is as follows. Binds to the 23S rRNA. The sequence is that of Large ribosomal subunit protein bL9 from Bacillus thuringiensis subsp. konkukian (strain 97-27).